We begin with the raw amino-acid sequence, 103 residues long: Large ribosomal subunit protein P2 (103 aa).

The tract at residues 64–103 (LAISSSQKSEPAQPADTAESTQATENKEEEDEDFDIFAAF) is disordered. A compositionally biased stretch (acidic residues) spans 90-103 (KEEEDEDFDIFAAF).

The protein belongs to the eukaryotic ribosomal protein P1/P2 family. As to quaternary structure, component of the large ribosomal subunit.

It is found in the cytoplasm. Its function is as follows. Plays an important role in the elongation step of protein synthesis. This Encephalitozoon cuniculi (strain GB-M1) (Microsporidian parasite) protein is Large ribosomal subunit protein P2 (RPP2A).